The primary structure comprises 220 residues: MLAKQRFVLDTTAFTDNQLRELLGDGDLNLSVDRMLDLIARSRIKLNISCHMPPITYKEFTDYMTRYDCPEETLIKAETWIVKKTPNRYDTQIPSQIFYEYVHDIRERMNKGLRISETLLWEAGIQSIIMASRDVKKTEIESEVLGKAIKDLRKKYRSALRKGTLDSAPDLDVLLLAKELGAGVVAADDGIRVWAERLGLRFLNATSFPKMLKEYLKYYE.

Belongs to the HARP family.

The catalysed reaction is Endonucleolytic cleavage of RNA, removing 5'-extranucleotides from tRNA precursor.. RNA-free RNase P that catalyzes the removal of the 5'-leader sequence from pre-tRNA to produce the mature 5'-terminus. The sequence is that of RNA-free ribonuclease P from Methanothermobacter thermautotrophicus (strain ATCC 29096 / DSM 1053 / JCM 10044 / NBRC 100330 / Delta H) (Methanobacterium thermoautotrophicum).